The sequence spans 386 residues: S-adenosylmethionine synthase (386 aa).

His-16 is an ATP binding site. Asp-18 serves as a coordination point for Mg(2+). Glu-44 provides a ligand contact to K(+). The L-methionine site is built by Glu-57 and Gln-100. The interval 100–110 (QSPDINQGVDQ) is flexible loop. Residues 164–166 (DGK), 230–231 (RF), Asp-239, 245–246 (RK), Ala-262, and Lys-266 each bind ATP. Residue Asp-239 participates in L-methionine binding. Position 270 (Lys-270) interacts with L-methionine.

This sequence belongs to the AdoMet synthase family. As to quaternary structure, homotetramer; dimer of dimers. Requires Mg(2+) as cofactor. K(+) is required as a cofactor.

The protein resides in the cytoplasm. It carries out the reaction L-methionine + ATP + H2O = S-adenosyl-L-methionine + phosphate + diphosphate. The protein operates within amino-acid biosynthesis; S-adenosyl-L-methionine biosynthesis; S-adenosyl-L-methionine from L-methionine: step 1/1. Catalyzes the formation of S-adenosylmethionine (AdoMet) from methionine and ATP. The overall synthetic reaction is composed of two sequential steps, AdoMet formation and the subsequent tripolyphosphate hydrolysis which occurs prior to release of AdoMet from the enzyme. The protein is S-adenosylmethionine synthase of Nitratiruptor sp. (strain SB155-2).